A 101-amino-acid chain; its full sequence is Large ribosomal subunit protein uL23 (101 aa).

Belongs to the universal ribosomal protein uL23 family. Part of the 50S ribosomal subunit. Contacts protein L29, and trigger factor when it is bound to the ribosome.

In terms of biological role, one of the early assembly proteins it binds 23S rRNA. One of the proteins that surrounds the polypeptide exit tunnel on the outside of the ribosome. Forms the main docking site for trigger factor binding to the ribosome. This chain is Large ribosomal subunit protein uL23, found in Corynebacterium kroppenstedtii (strain DSM 44385 / JCM 11950 / CIP 105744 / CCUG 35717).